Consider the following 446-residue polypeptide: Endoplasmic reticulum membrane adapter protein XK (446 aa).

The Cytoplasmic segment spans residues 1 to 2; it reads MK. The helical transmembrane segment at 3-23 threads the bilayer; it reads FPASVIASVFLFVAETAAALY. Residues 24–37 lie on the Extracellular side of the membrane; that stretch reads LSSTYRSAGDRMWQ. The chain crosses the membrane as a helical span at residues 38 to 58; the sequence is VLTLLFSLMPCALVQFTLLFV. The Cytoplasmic segment spans residues 59–68; it reads HRDLSRDRPL. Residues 69–89 traverse the membrane as a helical segment; the sequence is ALLMHLLQLGPLYRCCEVFCI. Topologically, residues 90–140 are extracellular; the sequence is YCQSDQNEEPYVSITKKRQMPKDGLSEEVEKEVGQAEGKLITHRSAFSRAS. A Phosphoserine modification is found at Ser115. Residues 141–161 form a helical membrane-spanning segment; that stretch reads VIQAFLGSAPQLTLQLYITVL. At 162 to 171 the chain is on the cytoplasmic side; that stretch reads EQNITTGRCF. A helical transmembrane segment spans residues 172-192; the sequence is IMTLSLLSIVYGALRCNILAI. Residues 193-208 are Extracellular-facing; the sequence is KIKYDEYEVKVKPLAY. A helical membrane pass occupies residues 209-229; sequence VCIFLWRSFEIATRVIVLVLF. Residues 230-235 are Cytoplasmic-facing; it reads TSVLKI. The helical transmembrane segment at 236–256 threads the bilayer; it reads WVVAVILVNFFSFFLYPWIVF. Topologically, residues 257–277 are extracellular; sequence WCSGSPFPENIEKALSRVGTT. Residues 278 to 298 traverse the membrane as a helical segment; sequence IVLCFLTLLYAGINMFCWSAV. Residues 299–317 are Cytoplasmic-facing; sequence QLKIDNPELISKSQNWYRL. A helical transmembrane segment spans residues 318–338; that stretch reads LIYYMTRFIENSVLLLLWYFF. The Extracellular portion of the chain corresponds to 339 to 349; that stretch reads KTDIYMYVCAP. Residues 350–370 traverse the membrane as a helical segment; it reads LLILQLLIGYCTGILFMLVFY. Topologically, residues 371–446 are cytoplasmic; sequence QFFHPCKKLF…IWTAVDLCSA (76 aa).

Belongs to the XK family. Heterodimer with Kell; disulfide-linked. Interacts with VPS13A.

The protein localises to the endoplasmic reticulum membrane. In terms of biological role, recruits the lipid transfer protein VPS13A from lipid droplets to the endoplasmic reticulum (ER) membrane. The chain is Endoplasmic reticulum membrane adapter protein XK from Mus musculus (Mouse).